Reading from the N-terminus, the 379-residue chain is Putative acetyl-CoA C-acetyltransferase VraB (379 aa).

Cys86 serves as the catalytic Acyl-thioester intermediate. Residue His338 is the Proton acceptor of the active site.

Belongs to the thiolase-like superfamily. Thiolase family.

The sequence is that of Putative acetyl-CoA C-acetyltransferase VraB (vraB) from Staphylococcus aureus (strain MSSA476).